We begin with the raw amino-acid sequence, 238 residues long: DNA repair protein RecO (238 aa).

It belongs to the RecO family.

Its function is as follows. Involved in DNA repair and RecF pathway recombination. In Anaplasma marginale (strain Florida), this protein is DNA repair protein RecO.